A 568-amino-acid polypeptide reads, in one-letter code: Kelch-like protein 12 (568 aa).

Residues Cys-33–Val-100 form the BTB domain. The region spanning Cys-135–Ile-236 is the BACK domain. Kelch repeat units lie at residues Val-282–Asp-329, Ile-331–Asp-379, Met-380–Gly-426, Ile-427–Asp-473, Ile-475–Gly-520, and Leu-522–Glu-567. Residues Gln-405–Lys-568 form an interaction with DVL3 region.

As to quaternary structure, component of the BCR(KLHL12) E3 ubiquitin ligase complex, at least composed of CUL3 and KLHL12 and RBX1. This complex interacts with DVL3 upon activation of the Wnt signaling pathway by WNT3A. Interacts with DRD4, KLHL2 and SEC31A. Interacts with PEF1 and PDCD6/ALG-2; interaction takes place in response to cytosolic calcium increase and leads to bridge together the BCR(KLHL12) complex and SEC31 (SEC31A or SEC31B). Ubiquitinated by the SCF(FBXL17) complex, leading to its degradation by the proteasome: ubiquitination by the SCF(FBXL17) complex takes place when aberrant BTB domain dimers are formed.

The protein localises to the cytoplasmic vesicle. It localises to the COPII-coated vesicle. It functions in the pathway protein modification; protein ubiquitination. Its function is as follows. Substrate-specific adapter of a BCR (BTB-CUL3-RBX1) E3 ubiquitin ligase complex that acts as a negative regulator of Wnt signaling pathway and ER-Golgi transport. The BCR(KLHL12) complex is involved in ER-Golgi transport by regulating the size of COPII coats, thereby playing a key role in collagen export, which is required for embryonic stem (ES) cells division: BCR(KLHL12) acts by mediating monoubiquitination of SEC31 (SEC31A or SEC31B). The BCR(KLHL12) complex is also involved in neural crest specification: in response to cytosolic calcium increase, interacts with the heterodimer formed with PEF1 and PDCD6/ALG-2, leading to bridge together the BCR(KLHL12) complex and SEC31 (SEC31A or SEC31B), promoting monoubiquitination of SEC31 and subsequent collagen export. As part of the BCR(KLHL12) complex, also acts as a negative regulator of the Wnt signaling pathway by mediating ubiquitination and subsequent proteolysis of DVL3. The BCR(KLHL12) complex also mediates polyubiquitination of DRD4 and PEF1, without leading to degradation of these proteins. This chain is Kelch-like protein 12 (Klhl12), found in Rattus norvegicus (Rat).